Reading from the N-terminus, the 220-residue chain is Adenylate kinase (220 aa).

Residue 10–15 (GSGKST) coordinates ATP. Residues 30–59 (ASGDIIRAEIKARTPLGIEMERYLSRGDLI) are NMP. Residues Arg-36, 57–59 (DLI), 83–86 (GYPR), and Gln-90 each bind AMP. The interval 124 to 161 (GRRICSKCGAVYHVEFNPPKVPGKCDICGGELIQRPDD) is LID. Arg-125 contacts ATP. Zn(2+)-binding residues include Cys-128 and Cys-131. 134 to 135 (VY) is a binding site for ATP. Zn(2+)-binding residues include Cys-148 and Cys-151. 2 residues coordinate AMP: Arg-158 and Arg-169. Gly-197 contacts ATP.

This sequence belongs to the adenylate kinase family. Monomer.

Its subcellular location is the cytoplasm. The catalysed reaction is AMP + ATP = 2 ADP. The protein operates within purine metabolism; AMP biosynthesis via salvage pathway; AMP from ADP: step 1/1. Functionally, catalyzes the reversible transfer of the terminal phosphate group between ATP and AMP. Plays an important role in cellular energy homeostasis and in adenine nucleotide metabolism. This is Adenylate kinase from Pyrococcus abyssi (strain GE5 / Orsay).